We begin with the raw amino-acid sequence, 785 residues long: E3 UFM1-protein ligase 1 homolog (785 aa).

The tract at residues 404-482 (NASFQDQDDD…AGGGGGNKKT (79 aa)) is disordered.

It belongs to the UFL1 family.

E3 UFM1-protein ligase that mediates ufmylation of target proteins. In Drosophila persimilis (Fruit fly), this protein is E3 UFM1-protein ligase 1 homolog.